The primary structure comprises 161 residues: Ribonuclease P protein component (161 aa).

The disordered stretch occupies residues 1 to 20; it reads MPDELRAEKSFPSKPYDSLK.

Belongs to the RnpA family. As to quaternary structure, consists of a catalytic RNA component (M1 or rnpB) and a protein subunit.

It catalyses the reaction Endonucleolytic cleavage of RNA, removing 5'-extranucleotides from tRNA precursor.. Its function is as follows. RNaseP catalyzes the removal of the 5'-leader sequence from pre-tRNA to produce the mature 5'-terminus. It can also cleave other RNA substrates such as 4.5S RNA. The protein component plays an auxiliary but essential role in vivo by binding to the 5'-leader sequence and broadening the substrate specificity of the ribozyme. The sequence is that of Ribonuclease P protein component from Helicobacter pylori (strain P12).